The sequence spans 156 residues: Calglandulin (156 aa).

4 consecutive EF-hand domains span residues 8-43, 44-79, 82-117, and 118-153; these read EQIT…IGIN, PTKR…YHEK, NQDE…AGEP, and LNEH…ESFK. Ca(2+)-binding residues include aspartate 131, aspartate 133, aspartate 135, threonine 137, and glutamate 142.

Belongs to the calmodulin family. Calglandulin subfamily. As to expression, expressed by the venom gland.

The protein resides in the cytoplasm. In terms of biological role, may be involved in the cellular control mechanism of the secretion of toxins from the gland into the venom. In Tropidechis carinatus (Australian rough-scaled snake), this protein is Calglandulin.